A 547-amino-acid chain; its full sequence is Cellodextrinase (547 aa).

Asp148 acts as the Nucleophile in catalysis. Catalysis depends on residues His474, Asp520, and Glu529.

Belongs to the glycosyl hydrolase 9 (cellulase E) family.

The protein localises to the secreted. It catalyses the reaction Endohydrolysis of (1-&gt;4)-beta-D-glucosidic linkages in cellulose, lichenin and cereal beta-D-glucans.. Is not inhibited by methylcellulose. In terms of biological role, glycoside hydrolase that rapidly hydrolyzes short-chain cellodextrins to yield either cellobiose or cellobiose and glucose as end products; cellobiose is not hydrolyzed further. Also shows limited activity against endoglucanase specific substrates (carboxymethylcellulose (CMC), lichenan, laminarin and xylan). The polypeptide is Cellodextrinase (Butyrivibrio fibrisolvens).